Here is a 404-residue protein sequence, read N- to C-terminus: Cysteine desulfurase IscS (404 aa).

Pyridoxal 5'-phosphate contacts are provided by residues Ala-75–Thr-76, Asn-155, Gln-183, and Ser-203–His-205. An N6-(pyridoxal phosphate)lysine modification is found at Lys-206. Residue Thr-243 participates in pyridoxal 5'-phosphate binding. The active-site Cysteine persulfide intermediate is Cys-328. A [2Fe-2S] cluster-binding site is contributed by Cys-328.

This sequence belongs to the class-V pyridoxal-phosphate-dependent aminotransferase family. NifS/IscS subfamily. Homodimer. Forms a heterotetramer with IscU, interacts with other sulfur acceptors. It depends on pyridoxal 5'-phosphate as a cofactor.

It localises to the cytoplasm. The catalysed reaction is (sulfur carrier)-H + L-cysteine = (sulfur carrier)-SH + L-alanine. The protein operates within cofactor biosynthesis; iron-sulfur cluster biosynthesis. Functionally, master enzyme that delivers sulfur to a number of partners involved in Fe-S cluster assembly, tRNA modification or cofactor biosynthesis. Catalyzes the removal of elemental sulfur atoms from cysteine to produce alanine. Functions as a sulfur delivery protein for Fe-S cluster synthesis onto IscU, an Fe-S scaffold assembly protein, as well as other S acceptor proteins. This Pseudomonas putida (strain GB-1) protein is Cysteine desulfurase IscS.